The primary structure comprises 757 residues: Probable ubiquitin carboxyl-terminal hydrolase MINDY-4 (757 aa).

Disordered regions lie at residues 152-173 (FVSSKRPPHKSKPMQTVPGETP) and 190-334 (SLDV…LPGG). The segment covering 190 to 201 (SLDVKRMGENSR) has biased composition (basic and acidic residues). Residues Ser219 and Ser223 each carry the phosphoserine modification. Residues 232 to 242 (SSPSSSSTQPQ) are compositionally biased toward low complexity. The span at 254-277 (CTQQDILASSNSSPSRTSLGQLSE) shows a compositional bias: polar residues. Ser289 bears the Phosphoserine mark. Residues 299 to 310 (PPWDRARPRDPS) are compositionally biased toward basic and acidic residues. The Nucleophile role is filled by Cys456. His677 functions as the Proton acceptor in the catalytic mechanism.

This sequence belongs to the MINDY deubiquitinase family. FAM188 subfamily.

The catalysed reaction is Thiol-dependent hydrolysis of ester, thioester, amide, peptide and isopeptide bonds formed by the C-terminal Gly of ubiquitin (a 76-residue protein attached to proteins as an intracellular targeting signal).. Its function is as follows. Probable hydrolase that can remove 'Lys-48'-linked conjugated ubiquitin from proteins. In Homo sapiens (Human), this protein is Probable ubiquitin carboxyl-terminal hydrolase MINDY-4.